A 303-amino-acid polypeptide reads, in one-letter code: ATP phosphoribosyltransferase (303 aa).

It belongs to the ATP phosphoribosyltransferase family. Long subfamily. Mg(2+) is required as a cofactor.

It localises to the cytoplasm. It catalyses the reaction 1-(5-phospho-beta-D-ribosyl)-ATP + diphosphate = 5-phospho-alpha-D-ribose 1-diphosphate + ATP. Its pathway is amino-acid biosynthesis; L-histidine biosynthesis; L-histidine from 5-phospho-alpha-D-ribose 1-diphosphate: step 1/9. Its activity is regulated as follows. Feedback inhibited by histidine. Functionally, catalyzes the condensation of ATP and 5-phosphoribose 1-diphosphate to form N'-(5'-phosphoribosyl)-ATP (PR-ATP). Has a crucial role in the pathway because the rate of histidine biosynthesis seems to be controlled primarily by regulation of HisG enzymatic activity. The protein is ATP phosphoribosyltransferase of Haemophilus influenzae (strain PittGG).